The chain runs to 153 residues: Endoribonuclease YbeY (153 aa).

The Zn(2+) site is built by His118, His122, and His128.

Belongs to the endoribonuclease YbeY family. The cofactor is Zn(2+).

It localises to the cytoplasm. Single strand-specific metallo-endoribonuclease involved in late-stage 70S ribosome quality control and in maturation of the 3' terminus of the 16S rRNA. The sequence is that of Endoribonuclease YbeY from Staphylococcus saprophyticus subsp. saprophyticus (strain ATCC 15305 / DSM 20229 / NCIMB 8711 / NCTC 7292 / S-41).